The sequence spans 793 residues: Flavin carrier protein 1 (793 aa).

The N-terminal stretch at 1-21 (MQVLVTLWCLICTCLVLPVAA) is a signal peptide. Over 22-163 (KKRTLTASSL…FFSNGKTVSQ (142 aa)) the chain is Lumenal. A glycan (N-linked (GlcNAc...) asparagine) is linked at Asn-143. Residues 164–184 (IGVKWVTAVIAGIGLLTSAVL) form a helical membrane-spanning segment. Residues 185–194 (STFGNSTAAS) lie on the Cytoplasmic side of the membrane. The chain crosses the membrane as a helical span at residues 195–215 (HISANTMSLFLYFQSVAVVAM). The Lumenal portion of the chain corresponds to 216-223 (QHVDSVPP). A helical transmembrane segment spans residues 224 to 244 (IAAAWSENLAWSMGLIRITFM). Residues 245-249 (QKIFR) are Cytoplasmic-facing. Residues 250–272 (WYVEATGGSASLYLTATTMSVLT) form a helical membrane-spanning segment. The Lumenal segment spans residues 273-317 (QRGLDYLKNTSVYKRAENVLYGNSNTLIFRGIKRMGYRMKIENTA). Asn-281 carries N-linked (GlcNAc...) asparagine glycosylation. A helical transmembrane segment spans residues 318-338 (IVCTGFTFFVLCGYFLAGFIM). Topologically, residues 339–372 (ACKYSIELCIRCGWMRSDRFYQFRKNWRSVLKGS) are cytoplasmic. Residues 373 to 393 (LLRYIYIGFTQLTILSFWEFT) form a helical membrane-spanning segment. The Lumenal portion of the chain corresponds to 394–397 (ERDS). The chain crosses the membrane as a helical span at residues 398 to 418 (AGVIVIACLFIVLSCGLMAWA). The Cytoplasmic segment spans residues 419 to 461 (AYRTIFFASKSVEMYNNPAALLYGDEYVLNKYGFFYTMFNAKH). A helical membrane pass occupies residues 462–482 (YWWNALLTTYILVKALFVGFA). Over 483–484 (QA) the chain is Lumenal. Residues 485 to 505 (SGKTQALAIFIIDLAYFVAII) form a helical membrane-spanning segment. The Cytoplasmic segment spans residues 506 to 516 (RYKPYLDRPTN). A helical membrane pass occupies residues 517–537 (IVNIFICTVTLVNSFLFMFFS). At 538–551 (NLFNQKYAVSAIMG) the chain is on the lumenal side. The chain crosses the membrane as a helical span at residues 552-572 (WVFFIMNAAFSLLLLLMILAF). The Cytoplasmic portion of the chain corresponds to 573–793 (TTIILFSKNP…KANILDPDYL (221 aa)). Position 610 is a phosphoserine (Ser-610). Residue Thr-626 is modified to Phosphothreonine. Disordered stretches follow at residues 649–674 (YDDE…PTFS) and 689–731 (KLGS…QESE). The span at 701–719 (ITQQEVSPDRASSSPNSKS) shows a compositional bias: polar residues. A phosphoserine mark is found at Ser-771 and Ser-774.

The protein belongs to the transient receptor potential (TRP) ion channel family.

The protein resides in the endoplasmic reticulum membrane. In terms of biological role, may be responsible for the transport of FAD into the endoplasmic reticulum lumen, where it is required for oxidative protein folding. This Saccharomyces cerevisiae (strain ATCC 204508 / S288c) (Baker's yeast) protein is Flavin carrier protein 1 (FLC1).